Here is a 772-residue protein sequence, read N- to C-terminus: Mitochondrial intermediate peptidase (772 aa).

Residues 1-33 constitute a mitochondrion transit peptide; the sequence is MLARPSTTVLARRPFFRFRGCLNEPRPTKARCL. H556 provides a ligand contact to Zn(2+). E557 is an active-site residue. Residues H560 and H563 each contribute to the Zn(2+) site.

Belongs to the peptidase M3 family. Requires Zn(2+) as cofactor.

The protein resides in the mitochondrion matrix. The catalysed reaction is Release of an N-terminal octapeptide as second stage of processing of some proteins imported into the mitochondrion.. Functionally, cleaves proteins, imported into the mitochondrion, to their mature size. While most mitochondrial precursor proteins are processed to the mature form in one step by mitochondrial processing peptidase (MPP), the sequential cleavage by MIP of an octapeptide after initial processing by MPP is a required step for a subgroup of nuclear-encoded precursor proteins destined for the matrix or the inner membrane. The chain is Mitochondrial intermediate peptidase (OCT1) from Coprinopsis scobicola (Ink cap fungus).